The following is a 215-amino-acid chain: Large ribosomal subunit protein bL25 (215 aa).

Residues 192–202 (EEEEVEEEVAE) show a composition bias toward acidic residues. The segment at 192–215 (EEEEVEEEVAEPEVIKRKEEEEEE) is disordered. A compositionally biased stretch (basic and acidic residues) spans 204 to 215 (EVIKRKEEEEEE).

Belongs to the bacterial ribosomal protein bL25 family. CTC subfamily. As to quaternary structure, part of the 50S ribosomal subunit; part of the 5S rRNA/L5/L18/L25 subcomplex. Contacts the 5S rRNA. Binds to the 5S rRNA independently of L5 and L18.

In terms of biological role, this is one of the proteins that binds to the 5S RNA in the ribosome where it forms part of the central protuberance. This chain is Large ribosomal subunit protein bL25, found in Thermotoga neapolitana (strain ATCC 49049 / DSM 4359 / NBRC 107923 / NS-E).